The sequence spans 491 residues: Ketol-acid reductoisomerase (NADP(+)) (491 aa).

The KARI N-terminal Rossmann domain maps to 15-208; sequence AQLGKCRFMG…GGHRAGVLES (194 aa). NADP(+)-binding positions include 45-48, arginine 68, arginine 76, serine 78, and 108-110; these read CGAQ and DKQ. Residue histidine 132 is part of the active site. Residue glycine 158 participates in NADP(+) binding. KARI C-terminal knotted domains are found at residues 209–344 and 345–484; these read SFVA…TAPQ and FEGK…MTDM. Aspartate 217, glutamate 221, glutamate 389, and glutamate 393 together coordinate Mg(2+). Substrate is bound at residue serine 414.

It belongs to the ketol-acid reductoisomerase family. The cofactor is Mg(2+).

The enzyme catalyses (2R)-2,3-dihydroxy-3-methylbutanoate + NADP(+) = (2S)-2-acetolactate + NADPH + H(+). It catalyses the reaction (2R,3R)-2,3-dihydroxy-3-methylpentanoate + NADP(+) = (S)-2-ethyl-2-hydroxy-3-oxobutanoate + NADPH + H(+). The protein operates within amino-acid biosynthesis; L-isoleucine biosynthesis; L-isoleucine from 2-oxobutanoate: step 2/4. It functions in the pathway amino-acid biosynthesis; L-valine biosynthesis; L-valine from pyruvate: step 2/4. In terms of biological role, involved in the biosynthesis of branched-chain amino acids (BCAA). Catalyzes an alkyl-migration followed by a ketol-acid reduction of (S)-2-acetolactate (S2AL) to yield (R)-2,3-dihydroxy-isovalerate. In the isomerase reaction, S2AL is rearranged via a Mg-dependent methyl migration to produce 3-hydroxy-3-methyl-2-ketobutyrate (HMKB). In the reductase reaction, this 2-ketoacid undergoes a metal-dependent reduction by NADPH to yield (R)-2,3-dihydroxy-isovalerate. The chain is Ketol-acid reductoisomerase (NADP(+)) from Salmonella agona (strain SL483).